Consider the following 804-residue polypeptide: General transcription and DNA repair factor IIH helicase/translocase subunit XPB (804 aa).

Disordered stretches follow at residues 1–61 (MSLK…NSNE) and 220–255 (QSSK…KSSS). Over residues 14-36 (PDEDLEEYSDYSDVDNYGEEDDD) the composition is skewed to acidic residues. 2 stretches are compositionally biased toward low complexity: residues 47–60 (NNNK…TNSN) and 220–229 (QSSKQKSSKP). Residues 236–255 (EDKKDITNDSSKETAEKSSS) are compositionally biased toward basic and acidic residues. The region spanning 335–497 (MFGNGRARSG…DLNFLIGPKM (163 aa)) is the Helicase ATP-binding domain. 348–355 (LPCGAGKT) provides a ligand contact to ATP. Residues 450–453 (DEVH) carry the DEVH box motif. Residues 551–705 (QACQFLIDYH…KVITNLKGME (155 aa)) form the Helicase C-terminal domain. Disordered stretches follow at residues 736–761 (DDGE…SSGS) and 782–804 (KQLK…TKRR). Residues 784 to 793 (LKKDSKEHHA) show a composition bias toward basic and acidic residues. The segment covering 794 to 804 (LFRKHLYTKRR) has biased composition (basic residues).

Belongs to the helicase family. RAD25/XPB subfamily. Component of the 7-subunit TFIIH core complex composed of XPB/ptr8, XPD/rad15, ssl1, tfb1, tfb2, tfb4 and tfb5, which is active in NER. The core complex associates with the 3-subunit CTD-kinase module TFIIK composed of mcs2/cyclin H, mcs6/cdk7 and pmh1/tfb3 to form the 10-subunit holoenzyme (holo-TFIIH) active in transcription.

It localises to the nucleus. It catalyses the reaction Couples ATP hydrolysis with the unwinding of duplex DNA by translocating in the 3'-5' direction.. The enzyme catalyses ATP + H2O = ADP + phosphate + H(+). Its function is as follows. Probable ATP-dependent 3'-5' DNA helicase/translocase. Binds dsDNA rather than ssDNA, unzipping it in a translocase rather than classical helicase activity. Component of the general transcription and DNA repair factor IIH (TFIIH) core complex. When complexed to CDK-activating kinase (CAK), involved in RNA transcription by RNA polymerase II. Also involved in transcription-coupled nucleotide excision repair (NER) of damaged DNA. In NER, TFIIH acts by opening DNA around the lesion to allow the excision of the damaged oligonucleotide and its replacement by a new DNA fragment. The ATPase activity of XPB/ptr8, but not its helicase activity, is required for DNA opening. In transcription, TFIIH has an essential role in transcription initiation. When the pre-initiation complex (PIC) has been established, TFIIH is required for promoter opening and promoter escape. The ATP-dependent helicase activity of XPB/ptr8 is required for promoter escape but not for promoter opening. Plays a role in mRNA export. In Schizosaccharomyces pombe (strain 972 / ATCC 24843) (Fission yeast), this protein is General transcription and DNA repair factor IIH helicase/translocase subunit XPB.